A 590-amino-acid polypeptide reads, in one-letter code: Beta-fructofuranosidase, insoluble isoenzyme 4 (590 aa).

Residues 1–28 (MVMAPIPQPWHQWPFLILFFLVLFSCES) form the signal peptide. Residues 71–74 (WIND) and Q90 each bind substrate. D74 is a catalytic residue. N94 is a glycosylation site (N-linked (GlcNAc...) asparagine). Residues W98 and 133–134 (WT) contribute to the substrate site. An N-linked (GlcNAc...) asparagine glycan is attached at N167. 198 to 199 (RD) is a substrate binding site. N247 is a glycosylation site (N-linked (GlcNAc...) asparagine). Substrate is bound by residues E253 and D287. The N-linked (GlcNAc...) asparagine glycan is linked to N345. C445 and C491 are joined by a disulfide. N565 carries N-linked (GlcNAc...) asparagine glycosylation.

This sequence belongs to the glycosyl hydrolase 32 family. Expressed in leaves. Expressed at moderate levels in roots and flowers, and weakly in seeds.

The protein resides in the secreted. The protein localises to the extracellular space. It is found in the apoplast. Its subcellular location is the cell wall. The catalysed reaction is Hydrolysis of terminal non-reducing beta-D-fructofuranoside residues in beta-D-fructofuranosides.. May play a role in sucrose partitioning during seed development and in stress response. In Oryza sativa subsp. japonica (Rice), this protein is Beta-fructofuranosidase, insoluble isoenzyme 4 (CIN4).